Reading from the N-terminus, the 660-residue chain is Bifunctional polymyxin resistance protein ArnA (660 aa).

The segment at 1 to 304 (MKTVVFAYHD…TLGLVQGSRL (304 aa)) is formyltransferase ArnAFT. Residue 86–88 (HLI) coordinates (6R)-10-formyltetrahydrofolate. Residue histidine 104 is the Proton donor; for formyltransferase activity of the active site. Residues arginine 114 and 136-140 (VKRAD) each bind (6R)-10-formyltetrahydrofolate. The segment at 314–660 (RRTRVLILGV…RTVDLTDKPS (347 aa)) is dehydrogenase ArnADH. NAD(+) contacts are provided by residues aspartate 347 and 368-369 (DI). Residues alanine 393, tyrosine 398, and 432 to 433 (TS) each bind UDP-alpha-D-glucuronate. Glutamate 434 acts as the Proton acceptor; for decarboxylase activity in catalysis. UDP-alpha-D-glucuronate is bound by residues arginine 460, asparagine 492, 526 to 535 (KLIDGGKQKR), and tyrosine 613. Arginine 619 acts as the Proton donor; for decarboxylase activity in catalysis.

In the N-terminal section; belongs to the Fmt family. UDP-L-Ara4N formyltransferase subfamily. The protein in the C-terminal section; belongs to the NAD(P)-dependent epimerase/dehydratase family. UDP-glucuronic acid decarboxylase subfamily. In terms of assembly, homohexamer, formed by a dimer of trimers.

The catalysed reaction is UDP-alpha-D-glucuronate + NAD(+) = UDP-beta-L-threo-pentopyranos-4-ulose + CO2 + NADH. The enzyme catalyses UDP-4-amino-4-deoxy-beta-L-arabinose + (6R)-10-formyltetrahydrofolate = UDP-4-deoxy-4-formamido-beta-L-arabinose + (6S)-5,6,7,8-tetrahydrofolate + H(+). It functions in the pathway nucleotide-sugar biosynthesis; UDP-4-deoxy-4-formamido-beta-L-arabinose biosynthesis; UDP-4-deoxy-4-formamido-beta-L-arabinose from UDP-alpha-D-glucuronate: step 1/3. The protein operates within nucleotide-sugar biosynthesis; UDP-4-deoxy-4-formamido-beta-L-arabinose biosynthesis; UDP-4-deoxy-4-formamido-beta-L-arabinose from UDP-alpha-D-glucuronate: step 3/3. Its pathway is bacterial outer membrane biogenesis; lipopolysaccharide biosynthesis. Bifunctional enzyme that catalyzes the oxidative decarboxylation of UDP-glucuronic acid (UDP-GlcUA) to UDP-4-keto-arabinose (UDP-Ara4O) and the addition of a formyl group to UDP-4-amino-4-deoxy-L-arabinose (UDP-L-Ara4N) to form UDP-L-4-formamido-arabinose (UDP-L-Ara4FN). The modified arabinose is attached to lipid A and is required for resistance to polymyxin and cationic antimicrobial peptides. In Escherichia coli O127:H6 (strain E2348/69 / EPEC), this protein is Bifunctional polymyxin resistance protein ArnA.